The sequence spans 87 residues: RNA-binding protein Hfq (87 aa).

Residues 9 to 68 form the Sm domain; sequence DPFLNTLRRERIPVSIYLVNGIKLQGYIESFDQFVILLKNSISQMIYKHAISTVVPNHTN. Residues 66-87 form a disordered region; the sequence is HTNNQEHNQSQYNNNNACISKP.

Belongs to the Hfq family. Homohexamer.

Its function is as follows. RNA chaperone that binds small regulatory RNA (sRNAs) and mRNAs to facilitate mRNA translational regulation in response to envelope stress, environmental stress and changes in metabolite concentrations. Also binds with high specificity to tRNAs. The polypeptide is RNA-binding protein Hfq (Wigglesworthia glossinidia brevipalpis).